A 424-amino-acid polypeptide reads, in one-letter code: Histidine--tRNA ligase (424 aa).

This sequence belongs to the class-II aminoacyl-tRNA synthetase family. In terms of assembly, homodimer.

It localises to the cytoplasm. The enzyme catalyses tRNA(His) + L-histidine + ATP = L-histidyl-tRNA(His) + AMP + diphosphate + H(+). The polypeptide is Histidine--tRNA ligase (Bacillus velezensis (strain DSM 23117 / BGSC 10A6 / LMG 26770 / FZB42) (Bacillus amyloliquefaciens subsp. plantarum)).